Here is a 126-residue protein sequence, read N- to C-terminus: Fluoride-specific ion channel FluC (126 aa).

4 helical membrane-spanning segments follow: residues 3 to 23 (FAIL…RFLV), 37 to 57 (IGTL…IACV), 70 to 90 (VIGL…MDNV), and 104 to 124 (NVLL…HWLM). Na(+) contacts are provided by Gly-77 and Thr-80.

This sequence belongs to the fluoride channel Fluc/FEX (TC 1.A.43) family.

Its subcellular location is the cell inner membrane. The enzyme catalyses fluoride(in) = fluoride(out). With respect to regulation, na(+) is not transported, but it plays an essential structural role and its presence is essential for fluoride channel function. Functionally, fluoride-specific ion channel. Important for reducing fluoride concentration in the cell, thus reducing its toxicity. This Vibrio cholerae serotype O1 (strain ATCC 39541 / Classical Ogawa 395 / O395) protein is Fluoride-specific ion channel FluC.